Reading from the N-terminus, the 777-residue chain is Myotubularin-related protein 10 (777 aa).

The tract at residues 196–217 (PSGDGGGGGGGGNGAGGGSSQK) is disordered. Over residues 197 to 214 (SGDGGGGGGGGNGAGGGS) the composition is skewed to gly residues. The Myotubularin phosphatase domain maps to 221–661 (FETYSDWDRE…THIKLWKLCY (441 aa)). Phosphoserine is present on residues S607 and S751.

Belongs to the protein-tyrosine phosphatase family. Non-receptor class myotubularin subfamily.

This Homo sapiens (Human) protein is Myotubularin-related protein 10 (MTMR10).